Reading from the N-terminus, the 306-residue chain is MKPTKQILEDILDEVRPLIGQGKVADYIPALACVPNDKLGIAVFTNDGEMLTAGDATECFSIQSISKALSLTLAMELYQPEELWQRVGKEPSGQAFNSLIQLEMEQGVPRNPFINAGAIVISDMLYSRFSAPKHRLLEFVRKLSGNDHIIYDRVVANSEMDHSDRNASIAYLMRSFGNFDNEVMPVLKNYFHACALSMNCVDLARTFGYLANKGIQPGISEPIVTPMQCKQINALMATCGLYDGAGEFAYRVGMPGKSGVGGGIIAIVPGEMTIAVWSPELDPSGNSLAGTKALELLSERIGRSIF.

Ser-64, Asn-115, Glu-159, Asn-166, Tyr-190, Tyr-242, and Val-260 together coordinate substrate.

Belongs to the glutaminase family. In terms of assembly, homotetramer.

The enzyme catalyses L-glutamine + H2O = L-glutamate + NH4(+). The polypeptide is Glutaminase (Aliivibrio fischeri (strain ATCC 700601 / ES114) (Vibrio fischeri)).